Here is a 68-residue protein sequence, read N- to C-terminus: Serine rich endogenous peptide 22 (68 aa).

The signal sequence occupies residues 1–25 (MNKALVWLITLLFLIFSATPNRVLA). The SCOOP motif signature appears at 50 to 64 (KIGVGASNSGHSPGA). The SxS motif essential for MIK2 binding motif lies at 56 to 58 (SNS).

The protein belongs to the serine rich endogenous peptide (SCOOP) phytocytokine family. Interacts with MIK2 (via extracellular leucine-rich repeat domain); this interaction triggers the formation of complex between MIK2 and the BAK1/SERK3 and SERK4 coreceptors, and subsequent BAK1 activation by phosphorylation.

It localises to the cell membrane. The protein localises to the secreted. Its subcellular location is the extracellular space. The protein resides in the apoplast. Functionally, brassicaceae-specific phytocytokine (plant endogenous peptide released into the apoplast) perceived by MIK2 in a BAK1/SERK3 and SERK4 coreceptors-dependent manner, that modulates various physiological and antimicrobial processes including growth prevention and reactive oxygen species (ROS) response regulation. The chain is Serine rich endogenous peptide 22 from Arabidopsis thaliana (Mouse-ear cress).